The chain runs to 249 residues: Pyridoxine 5'-phosphate synthase (249 aa).

A 3-amino-2-oxopropyl phosphate-binding site is contributed by asparagine 7. 9-10 (DH) is a binding site for 1-deoxy-D-xylulose 5-phosphate. Arginine 18 lines the 3-amino-2-oxopropyl phosphate pocket. Histidine 43 acts as the Proton acceptor in catalysis. Residues arginine 45 and histidine 50 each contribute to the 1-deoxy-D-xylulose 5-phosphate site. Residue glutamate 70 is the Proton acceptor of the active site. Threonine 100 is a 1-deoxy-D-xylulose 5-phosphate binding site. The active-site Proton donor is the histidine 190. Residues glycine 191 and 212–213 (GH) contribute to the 3-amino-2-oxopropyl phosphate site.

Belongs to the PNP synthase family. In terms of assembly, homooctamer; tetramer of dimers.

The protein localises to the cytoplasm. It carries out the reaction 3-amino-2-oxopropyl phosphate + 1-deoxy-D-xylulose 5-phosphate = pyridoxine 5'-phosphate + phosphate + 2 H2O + H(+). Its pathway is cofactor biosynthesis; pyridoxine 5'-phosphate biosynthesis; pyridoxine 5'-phosphate from D-erythrose 4-phosphate: step 5/5. In terms of biological role, catalyzes the complicated ring closure reaction between the two acyclic compounds 1-deoxy-D-xylulose-5-phosphate (DXP) and 3-amino-2-oxopropyl phosphate (1-amino-acetone-3-phosphate or AAP) to form pyridoxine 5'-phosphate (PNP) and inorganic phosphate. This chain is Pyridoxine 5'-phosphate synthase, found in Synechococcus sp. (strain CC9311).